Here is a 473-residue protein sequence, read N- to C-terminus: Pentatricopeptide repeat-containing protein At3g60050 (473 aa).

PPR repeat units follow at residues 148 to 182 (TVNS…GFPT), 183 to 217 (TART…NYRP), 218 to 252 (FKHS…GFSP), 253 to 287 (DVLT…GFSP), 288 to 322 (DSYT…GIDP), 323 to 357 (SVLH…GCRP), 358 to 392 (DVVC…GQLP), 393 to 427 (NVFT…GCNP), and 428 to 462 (NFVV…GHYV).

It belongs to the PPR family. P subfamily.

This chain is Pentatricopeptide repeat-containing protein At3g60050, found in Arabidopsis thaliana (Mouse-ear cress).